The following is a 263-amino-acid chain: H-2 class II histocompatibility antigen, A-S beta chain (263 aa).

The signal sequence occupies residues 1–27 (MALQIPSLLLSAAVVVLMVLSSPGTEG). The tract at residues 28–120 (GDSERHFVFQ…VETHTSLRRL (93 aa)) is beta-1. Residues 28–224 (GDSERHFVFQ…RAQSESARSK (197 aa)) lie on the Extracellular side of the membrane. Cystine bridges form between cysteine 42–cysteine 104 and cysteine 143–cysteine 199. Asparagine 46 is a glycosylation site (N-linked (GlcNAc...) asparagine). A beta-2 region spans residues 121-214 (EQPNVVISLS…SLKSPITVEW (94 aa)). The 89-residue stretch at 123 to 211 (PNVVISLSRT…EHPSLKSPIT (89 aa)) folds into the Ig-like C1-type domain. Positions 215 to 224 (RAQSESARSK) are connecting peptide. The helical transmembrane segment at 225-245 (MLSGIGGCVLGVIFLGLGLFI) threads the bilayer. The Cytoplasmic segment spans residues 246–263 (RHRSQKGPRGPPPAGLLQ).

The protein belongs to the MHC class II family. Post-translationally, ubiquitinated in immature dendritic cells leading to down-regulation of MHC class II.

The protein resides in the membrane. In Mus musculus (Mouse), this protein is H-2 class II histocompatibility antigen, A-S beta chain (H2-Ab1).